Consider the following 309-residue polypeptide: Aspartate carbamoyltransferase catalytic subunit (309 aa).

Arginine 55 and threonine 56 together coordinate carbamoyl phosphate. An L-aspartate-binding site is contributed by lysine 85. Residues arginine 106, histidine 135, and glutamine 138 each contribute to the carbamoyl phosphate site. L-aspartate is bound by residues arginine 168 and arginine 230. Leucine 268 and proline 269 together coordinate carbamoyl phosphate.

This sequence belongs to the aspartate/ornithine carbamoyltransferase superfamily. ATCase family. Heterododecamer (2C3:3R2) of six catalytic PyrB chains organized as two trimers (C3), and six regulatory PyrI chains organized as three dimers (R2).

The catalysed reaction is carbamoyl phosphate + L-aspartate = N-carbamoyl-L-aspartate + phosphate + H(+). The protein operates within pyrimidine metabolism; UMP biosynthesis via de novo pathway; (S)-dihydroorotate from bicarbonate: step 2/3. Its function is as follows. Catalyzes the condensation of carbamoyl phosphate and aspartate to form carbamoyl aspartate and inorganic phosphate, the committed step in the de novo pyrimidine nucleotide biosynthesis pathway. The protein is Aspartate carbamoyltransferase catalytic subunit of Wigglesworthia glossinidia brevipalpis.